Consider the following 399-residue polypeptide: S-adenosylmethionine synthase (399 aa).

His17 is a binding site for ATP. Asp19 serves as a coordination point for Mg(2+). Glu45 is a K(+) binding site. Positions 58 and 101 each coordinate L-methionine. Residues 101–111 (QSADIAMGVDQ) form a flexible loop region. ATP-binding positions include 177-179 (DGK), 244-245 (RF), Asp253, 259-260 (RK), Ala276, and Lys280. Asp253 is a binding site for L-methionine. Lys284 is an L-methionine binding site.

This sequence belongs to the AdoMet synthase family. As to quaternary structure, homotetramer; dimer of dimers. Requires Mg(2+) as cofactor. K(+) is required as a cofactor.

Its subcellular location is the cytoplasm. The enzyme catalyses L-methionine + ATP + H2O = S-adenosyl-L-methionine + phosphate + diphosphate. The protein operates within amino-acid biosynthesis; S-adenosyl-L-methionine biosynthesis; S-adenosyl-L-methionine from L-methionine: step 1/1. Catalyzes the formation of S-adenosylmethionine (AdoMet) from methionine and ATP. The overall synthetic reaction is composed of two sequential steps, AdoMet formation and the subsequent tripolyphosphate hydrolysis which occurs prior to release of AdoMet from the enzyme. The sequence is that of S-adenosylmethionine synthase from Bacillus cereus (strain G9842).